Here is a 681-residue protein sequence, read N- to C-terminus: Potassium-transporting ATPase ATP-binding subunit (681 aa).

4 helical membrane-spanning segments follow: residues 37-57 (MFVVEVGTFITLLATIFPTYF), 64-84 (VGYNALVTFILFVTVLFANFA), 218-238 (IALTTVLVSLTIIFIVVVMTL), and 255-275 (IALLVCLIPTTIGGLLSAIGI). Aspartate 306 acts as the 4-aspartylphosphate intermediate in catalysis. Residues aspartate 343, glutamate 347, 375 to 382 (FSAETRMS), and lysine 394 contribute to the ATP site. Positions 517 and 521 each coordinate Mg(2+). The next 3 helical transmembrane spans lie at 573 to 595 (ALTTFSIANDVAKYFAILPAIIS), 615 to 635 (AILSALIYNAIIIPILIPIAM), and 655 to 675 (IYGLGGLIAPFVGIKLIDMII).

This sequence belongs to the cation transport ATPase (P-type) (TC 3.A.3) family. Type IA subfamily. In terms of assembly, the system is composed of three essential subunits: KdpA, KdpB and KdpC.

The protein resides in the cell membrane. The enzyme catalyses K(+)(out) + ATP + H2O = K(+)(in) + ADP + phosphate + H(+). Its function is as follows. Part of the high-affinity ATP-driven potassium transport (or Kdp) system, which catalyzes the hydrolysis of ATP coupled with the electrogenic transport of potassium into the cytoplasm. This subunit is responsible for energy coupling to the transport system and for the release of the potassium ions to the cytoplasm. The chain is Potassium-transporting ATPase ATP-binding subunit from Caldanaerobacter subterraneus subsp. tengcongensis (strain DSM 15242 / JCM 11007 / NBRC 100824 / MB4) (Thermoanaerobacter tengcongensis).